The primary structure comprises 619 residues: Dihydroxy-acid dehydratase (619 aa).

Residue Asp-81 coordinates Mg(2+). [2Fe-2S] cluster is bound at residue Cys-122. The Mg(2+) site is built by Asp-123 and Lys-124. An N6-carboxylysine modification is found at Lys-124. Cys-195 is a [2Fe-2S] cluster binding site. Glu-494 lines the Mg(2+) pocket. The active-site Proton acceptor is the Ser-520.

Belongs to the IlvD/Edd family. Homodimer. It depends on [2Fe-2S] cluster as a cofactor. Requires Mg(2+) as cofactor.

The catalysed reaction is (2R)-2,3-dihydroxy-3-methylbutanoate = 3-methyl-2-oxobutanoate + H2O. It catalyses the reaction (2R,3R)-2,3-dihydroxy-3-methylpentanoate = (S)-3-methyl-2-oxopentanoate + H2O. It functions in the pathway amino-acid biosynthesis; L-isoleucine biosynthesis; L-isoleucine from 2-oxobutanoate: step 3/4. The protein operates within amino-acid biosynthesis; L-valine biosynthesis; L-valine from pyruvate: step 3/4. Functionally, functions in the biosynthesis of branched-chain amino acids. Catalyzes the dehydration of (2R,3R)-2,3-dihydroxy-3-methylpentanoate (2,3-dihydroxy-3-methylvalerate) into 2-oxo-3-methylpentanoate (2-oxo-3-methylvalerate) and of (2R)-2,3-dihydroxy-3-methylbutanoate (2,3-dihydroxyisovalerate) into 2-oxo-3-methylbutanoate (2-oxoisovalerate), the penultimate precursor to L-isoleucine and L-valine, respectively. The chain is Dihydroxy-acid dehydratase from Shewanella denitrificans (strain OS217 / ATCC BAA-1090 / DSM 15013).